Here is a 160-residue protein sequence, read N- to C-terminus: tRNA (cytidine(34)-2'-O)-methyltransferase (160 aa).

Positions 78, 100, 120, and 128 each coordinate S-adenosyl-L-methionine.

It belongs to the class IV-like SAM-binding methyltransferase superfamily. RNA methyltransferase TrmH family. TrmL subfamily. In terms of assembly, homodimer.

The protein localises to the cytoplasm. The catalysed reaction is cytidine(34) in tRNA + S-adenosyl-L-methionine = 2'-O-methylcytidine(34) in tRNA + S-adenosyl-L-homocysteine + H(+). The enzyme catalyses 5-carboxymethylaminomethyluridine(34) in tRNA(Leu) + S-adenosyl-L-methionine = 5-carboxymethylaminomethyl-2'-O-methyluridine(34) in tRNA(Leu) + S-adenosyl-L-homocysteine + H(+). Methylates the ribose at the nucleotide 34 wobble position in the two leucyl isoacceptors tRNA(Leu)(CmAA) and tRNA(Leu)(cmnm5UmAA). Catalyzes the methyl transfer from S-adenosyl-L-methionine to the 2'-OH of the wobble nucleotide. This is tRNA (cytidine(34)-2'-O)-methyltransferase from Beijerinckia indica subsp. indica (strain ATCC 9039 / DSM 1715 / NCIMB 8712).